Here is a 797-residue protein sequence, read N- to C-terminus: Hid-1 family protein P27G11.12 (797 aa).

Belongs to the hid-1 family.

It is found in the cytoplasm. The protein resides in the nucleus. The polypeptide is Hid-1 family protein P27G11.12 (Schizosaccharomyces pombe (strain 972 / ATCC 24843) (Fission yeast)).